Here is a 164-residue protein sequence, read N- to C-terminus: Interferon gamma (164 aa).

Residues Met1–Gly19 form the signal peptide. N-linked (GlcNAc...) asparagine glycosylation is found at Asn42, Asn61, and Asn95.

This sequence belongs to the type II (or gamma) interferon family. Homodimer.

The protein resides in the secreted. Produced by lymphocytes activated by specific antigens or mitogens. IFN-gamma, in addition to having antiviral activity, has important immunoregulatory functions. It is a potent activator of macrophages, it has antiproliferative effects on transformed cells and it can potentiate the antiviral and antitumor effects of the type I interferons. The sequence is that of Interferon gamma (IFNG) from Anas platyrhynchos (Mallard).